A 136-amino-acid chain; its full sequence is Small ribosomal subunit protein uS9 (136 aa).

Residues 111–136 (TRDPRMKERKKTGQPGARKRFQFSKR) form a disordered region. Residues 117 to 136 (KERKKTGQPGARKRFQFSKR) are compositionally biased toward basic residues.

The protein belongs to the universal ribosomal protein uS9 family.

The sequence is that of Small ribosomal subunit protein uS9 from Methylacidiphilum infernorum (isolate V4) (Methylokorus infernorum (strain V4)).